Reading from the N-terminus, the 599-residue chain is Sulfite reductase [NADPH] flavoprotein alpha-component (599 aa).

Residues 64–202 form the Flavodoxin-like domain; the sequence is VTLISASQTG…AASEWRARVV (139 aa). Residues 70–75, 117–120, and 153–162 contribute to the FMN site; these read SQTGNA, STQG, and LGDTSYEFFC. In terms of domain architecture, FAD-binding FR-type spans 234–448; sequence DAPLIATLSV…IEHNDNFRLP (215 aa). FAD contacts are provided by residues threonine 322, alanine 356, 386-389, 404-406, tyrosine 410, and 419-422; these read RLYS, TVG, and GGAS. Residues 519–520, 525–529, and aspartate 561 contribute to the NADP(+) site; these read SR and KIYVQ. Residue tyrosine 599 coordinates FAD.

Belongs to the NADPH-dependent sulphite reductase flavoprotein subunit CysJ family. It in the N-terminal section; belongs to the flavodoxin family. This sequence in the C-terminal section; belongs to the flavoprotein pyridine nucleotide cytochrome reductase family. In terms of assembly, alpha(8)-beta(8). The alpha component is a flavoprotein, the beta component is a hemoprotein. The cofactor is FAD. Requires FMN as cofactor.

The catalysed reaction is hydrogen sulfide + 3 NADP(+) + 3 H2O = sulfite + 3 NADPH + 4 H(+). It functions in the pathway sulfur metabolism; hydrogen sulfide biosynthesis; hydrogen sulfide from sulfite (NADPH route): step 1/1. Functionally, component of the sulfite reductase complex that catalyzes the 6-electron reduction of sulfite to sulfide. This is one of several activities required for the biosynthesis of L-cysteine from sulfate. The flavoprotein component catalyzes the electron flow from NADPH -&gt; FAD -&gt; FMN to the hemoprotein component. This chain is Sulfite reductase [NADPH] flavoprotein alpha-component, found in Salmonella typhimurium (strain LT2 / SGSC1412 / ATCC 700720).